The primary structure comprises 54 residues: Large ribosomal subunit protein bL33 (54 aa).

Belongs to the bacterial ribosomal protein bL33 family.

This is Large ribosomal subunit protein bL33 from Stenotrophomonas maltophilia (strain K279a).